The sequence spans 2334 residues: Genome polyprotein (2334 aa).

The 161-residue stretch at 487–647 (QKVVADIHTL…EGWQSTRHGS (161 aa)) folds into the SF3 helicase domain. Position 1007 is an O-(5'-phospho-RNA)-tyrosine (Tyr1007). The 136-residue stretch at 1102–1237 (GLPGYLRFNG…SKMCTLIDCT (136 aa)) folds into the Peptidase C24 domain. Residues His1128, Asp1145, and Cys1205 each act as for 3CLpro activity in the active site. The RdRp catalytic domain maps to 1488–1612 (GDFLCLDYSK…AMTPMMVSLL (125 aa)). An intrachain disulfide couples Cys1577 to Cys1584. The disordered stretch occupies residues 1760–1784 (EGKPRADAPGTATTASVPGTTTDGM). The segment covering 1767 to 1781 (APGTATTASVPGTTT) has biased composition (low complexity).

Mn(2+) serves as cofactor. Post-translationally, specific enzymatic cleavages by its own cysteine protease yield mature proteins. The protease cleaves itself from the nascent polyprotein autocatalytically. Precursor p41 can be cleaved by viral 3CLpro into protein p19 and VPg, or cleaved by host protease into protein p23/2 and protein p18. In terms of processing, VPg is uridylylated by the polymerase and is covalently attached to the 5'-end of the polyadenylated genomic and subgenomic RNAs. This uridylylated form acts as a nucleotide-peptide primer for the polymerase.

It localises to the virion. The protein localises to the host cytoplasm. The catalysed reaction is a ribonucleoside 5'-triphosphate + H2O = a ribonucleoside 5'-diphosphate + phosphate + H(+). It carries out the reaction Endopeptidase with a preference for cleavage when the P1 position is occupied by Glu-|-Xaa and the P1' position is occupied by Gly-|-Yaa.. The enzyme catalyses RNA(n) + a ribonucleoside 5'-triphosphate = RNA(n+1) + diphosphate. Together with NTPase and NS4, initiates the formation of the replication complex. Induces the proliferation of the host smooth ER membranes forming long tubular structures. These remodeled membranes probably form the viral factories that contain the replication complex. Functionally, displays NTPase activity, but no helicase activity. Induces the formation of convoluted membranes derived from the host ER. These remodeled membranes probably form the viral factories that contain the replication complex. Together with NS2 and NS4, initiates the formation of the replication complex. Its function is as follows. Probable key protein responsible for the formation of membrane alterations by the virus. Induces the formation of convoluted membranes derived from the host ER. These remodeled membranes probably form the viral factories that contain the replication complex. Together with NS2 and NTPase, initiates the formation of the replication complex. In terms of biological role, viral genome-linked protein is covalently linked to the 5'-end of the positive-strand, negative-strand genomic RNAs and subgenomic RNA. Acts as a genome-linked replication primer. May recruit ribosome to viral RNA thereby promoting viral proteins translation. Interacts with host translation initiation complex to allow the translation of viral proteins. Processes the polyprotein. 3CLpro-RdRp is first released by autocleavage, then all other proteins are cleaved. May cleave polyadenylate-binding protein thereby inhibiting cellular translation. Functionally, replicates genomic and antigenomic RNA by recognizing replications specific signals. Also transcribes a subgenomic mRNA by initiating RNA synthesis internally on antigenomic RNA. This sgRNA codes for structural proteins. Catalyzes the covalent attachment VPg with viral RNAs. Its function is as follows. Capsid protein VP60 self assembles to form an icosahedral capsid with a T=3 symmetry, about 35 nm in diameter, and consisting of 180 capsid proteins. A smaller form of capsid with a diameter of 23 nm might be capsid proteins assembled as icosahedron with T=1 symmetry. The capsid encapsulate VP2 proteins and genomic or subgenomic RNA. Attaches virion to target cells by binding histo-blood group antigens, inducing endocytosis of the viral particle. Acidification of the endosome induces conformational change of capsid protein thereby injecting virus genomic RNA into host cytoplasm. This Lepus europaeus (European hare) protein is Genome polyprotein.